A 271-amino-acid chain; its full sequence is Shikimate dehydrogenase (NADP(+)) (271 aa).

Shikimate contacts are provided by residues 14-16 (SKS) and Thr61. The Proton acceptor role is filled by Lys65. Asn86 and Asp102 together coordinate shikimate. Residues 126–130 (GAGGA), 149–154 (NRTFSR), and Met213 each bind NADP(+). Shikimate is bound at residue Tyr215. Gly238 is an NADP(+) binding site.

The protein belongs to the shikimate dehydrogenase family. In terms of assembly, homodimer.

It catalyses the reaction shikimate + NADP(+) = 3-dehydroshikimate + NADPH + H(+). Its pathway is metabolic intermediate biosynthesis; chorismate biosynthesis; chorismate from D-erythrose 4-phosphate and phosphoenolpyruvate: step 4/7. Involved in the biosynthesis of the chorismate, which leads to the biosynthesis of aromatic amino acids. Catalyzes the reversible NADPH linked reduction of 3-dehydroshikimate (DHSA) to yield shikimate (SA). In Histophilus somni (strain 2336) (Haemophilus somnus), this protein is Shikimate dehydrogenase (NADP(+)).